The primary structure comprises 451 residues: MVNFVHPEEMYLFVESIRPFEVREVGSPKWLEVHEMILGLSQQAALELSQNREEEVKEFLISRDKLRVLIHEAYCVTLWKTRVLPHLLEIDPNPQATFLIYTVLYHEAALVALLDVCLYHPSGCETLQESVLDLIDYCAQAISQVIGLVSMGYHENETKLDVDEAVLTELERQKRDFIYKIGLRCISVLNYIADNVTLFHLSAARRLLVTHDIPWLMADVLSFRPWQRKTSKGIQKFIDEKWTNVDDVTKIVKPEAQAWFCVRQLLLNPQIMENYAFNEARCKQLHKLLGLMHEPLLDQLPPLIELKVFLSRLTLSGNTAKTQPLLLEDIPQIQEELLKDVEENGGFYQIAQDQDSVFLSKNKENICALATRLSKAYGTDLLCELEQNMDDLKMGEAKDAGAGGDGDTDHTCATCQAKAKKKCACCKKVHYCSRDCQLKDWPQHKLVCLKT.

Residues cysteine 412, cysteine 415, cysteine 423, cysteine 426, cysteine 432, cysteine 436, histidine 444, and cysteine 448 each coordinate Zn(2+). The MYND-type zinc finger occupies 412-448; the sequence is CATCQAKAKKKCACCKKVHYCSRDCQLKDWPQHKLVC.

The protein belongs to the ZMYND10 family. In terms of tissue distribution, specifically expressed in cells with flagella and motile cilia: chordotonal sensory neurons and sperm.

It is found in the cytoplasm. The protein localises to the cell projection. The protein resides in the cilium. It localises to the dynein axonemal particle. In terms of biological role, plays a role in axonemal structure organization and motility. May be involved in axonemal pre-assembly of inner and outer dynein arms (IDA and ODA, respectively) for proper axoneme building for cilia motility. This is Zinc finger MYND domain-containing protein 10 homolog from Drosophila melanogaster (Fruit fly).